We begin with the raw amino-acid sequence, 507 residues long: Maturase K (507 aa).

The protein belongs to the intron maturase 2 family. MatK subfamily.

It localises to the plastid. It is found in the chloroplast. In terms of biological role, usually encoded in the trnK tRNA gene intron. Probably assists in splicing its own and other chloroplast group II introns. The polypeptide is Maturase K (Ranunculus repens (Creeping buttercup)).